The following is a 228-amino-acid chain: Leucokinins (228 aa).

An N-terminal signal peptide occupies residues methionine 1–glycine 18. Positions tryptophan 19–glutamine 164 are excised as a propeptide. A disordered region spans residues glutamate 80 to asparagine 118. Glycine amide is present on residues glycine 180 and glycine 193. Positions asparagine 197–isoleucine 209 are excised as a propeptide. The residue at position 217 (glycine 217) is a Glycine amide. A propeptide spanning residues asparagine 221–phenylalanine 228 is cleaved from the precursor.

The protein localises to the secreted. Stimulates both fluid secretion by the Malpighian tubules and hindgut contractions. Depolarize the transepithelial voltage of the Malpighian tubules in concentrations of less than 10(-9) M and increase the frequency of hindgut contractions at concentrations above 10(-8) M. This chain is Leucokinins, found in Aedes aegypti (Yellowfever mosquito).